The chain runs to 219 residues: U-scoloptoxin(11)-Sm7a (219 aa).

Positions 1–15 are cleaved as a signal peptide; that stretch reads MYLFLMINYFVLANS.

Belongs to the scoloptoxin-11 family. Post-translationally, contains 8 disulfide bonds. Expressed by the venom gland.

The protein localises to the secreted. The chain is U-scoloptoxin(11)-Sm7a from Scolopendra morsitans (Tanzanian blue ringleg centipede).